The following is a 293-amino-acid chain: MDTELLKTFLEVSRTRHFGRAAESLYLTQSAVSFRIRQLENQLGANLFTRHRNNIRLTPAGERLVPYAEMLLNTWRLAKKEVIHSLQHTELSIGATASLWEAYLTPWLQQLYEQQEELRLEARIALRNSLVKQLHERQLDLLITTEPPKMDELACLLLGHFSLRLYSSFSLDLPKEDDTPNEHKNASEVPYIKLEWGADFHQQENRLLDSEQAPILTTTSAHLTRQLLETTGGCAFLPEHWQKEYPQLVIHPDIPPIVRPLYAVWLQNSDQQALIRQLLKTPMNNATQSVTRE.

The HTH lysR-type domain occupies 1–58 (MDTELLKTFLEVSRTRHFGRAAESLYLTQSAVSFRIRQLENQLGANLFTRHRNNIRLT). The H-T-H motif DNA-binding region spans 18–37 (FGRAAESLYLTQSAVSFRIR).

The protein belongs to the LysR transcriptional regulatory family.

Functionally, negatively regulates the transcription of the flagellar master operon flhDC by binding to the upstream region of the operon. The polypeptide is HTH-type transcriptional regulator HdfR (Yersinia pseudotuberculosis serotype O:1b (strain IP 31758)).